Here is a 474-residue protein sequence, read N- to C-terminus: Chromosomal replication initiator protein DnaA (474 aa).

The segment at 1–90 (MSSSLWLQCL…RQVVVPSSQI (90 aa)) is domain I, interacts with DnaA modulators. The tract at residues 91–137 (IAPAAPAVTLAPRPLPATRILQDDAPSRSWEPAPSPVQPESKSGYRS) is domain II. Residues 112–137 (QDDAPSRSWEPAPSPVQPESKSGYRS) form a disordered region. Residues 128–137 (QPESKSGYRS) are compositionally biased toward polar residues. A domain III, AAA+ region region spans residues 138–354 (NVNPKHNFNN…GALNRVIANA (217 aa)). Glycine 182, glycine 184, lysine 185, and threonine 186 together coordinate ATP. Residues 355-474 (NFTGRAITID…YSNLIRTLST (120 aa)) form a domain IV, binds dsDNA region.

This sequence belongs to the DnaA family. In terms of assembly, oligomerizes as a right-handed, spiral filament on DNA at oriC.

The protein localises to the cytoplasm. Its function is as follows. Plays an essential role in the initiation and regulation of chromosomal replication. ATP-DnaA binds to the origin of replication (oriC) to initiate formation of the DNA replication initiation complex once per cell cycle. Binds the DnaA box (a 9 base pair repeat at the origin) and separates the double-stranded (ds)DNA. Forms a right-handed helical filament on oriC DNA; dsDNA binds to the exterior of the filament while single-stranded (ss)DNA is stabiized in the filament's interior. The ATP-DnaA-oriC complex binds and stabilizes one strand of the AT-rich DNA unwinding element (DUE), permitting loading of DNA polymerase. After initiation quickly degrades to an ADP-DnaA complex that is not apt for DNA replication. Binds acidic phospholipids. This chain is Chromosomal replication initiator protein DnaA, found in Photobacterium profundum (strain SS9).